We begin with the raw amino-acid sequence, 588 residues long: Zeta-carotene desaturase, chloroplastic/chromoplastic (588 aa).

The transit peptide at 1 to 49 directs the protein to the chloroplast and chromoplast; sequence MATCSAYLCCPATSASLKKRVFPDGSAGFLFFGGRRLSNRLVTPKSVIR.

This sequence belongs to the zeta carotene desaturase family. Monomer and dimer. Decylplastoquinone serves as cofactor. 6-decylubiquinone is required as a cofactor.

It is found in the plastid. The protein resides in the chloroplast. The protein localises to the chromoplast. It catalyses the reaction 9,9'-di-cis-zeta-carotene + 2 a quinone = 7,7',9,9'-tetra-cis-lycopene + 2 a quinol. The protein operates within carotenoid biosynthesis; lycopene biosynthesis. In terms of biological role, catalyzes the conversion of zeta-carotene to lycopene via the intermediary of neurosporene. It carries out two consecutive desaturations (introduction of double bonds) at positions C-7 and C-7'. Shows stereoselectivity toward trans C15-C15'zeta-carotene double bond. The zeta-carotene produced by the phytoene desaturase PDS has a C15-C15' double bond in the cis configuration and it requires isomerization before being recognized as substrate by ZDS. No activity with all-trans-zeta-carotene. The main product is 7,9,7',9'-tetra-cis-lycopene (pro-lycopene). The polypeptide is Zeta-carotene desaturase, chloroplastic/chromoplastic (ZDS) (Capsicum annuum (Capsicum pepper)).